The following is a 298-amino-acid chain: MVDTGTDRVKRGMAEMQKGGVIMDVVNAEQAKIAEEAGAVAVMALERVPADIRAAGGVARMADPTIVEEVMNAVSIPVMAKCRIGHIVEARVLEALGVDYIDESEVLTPADEVYHLNKRDFTVPFVCGARDLGEAARRIGEGASMIRTKGEPGTGNIVEAVRHMRMMQAQIRKVSNMSTDELMTEAKNIGAPYELLLSIKETGELPVVNFAAGGVATPADAALMMQLGADGVFVGSGIFKSETPEKFARAIVEATTHYEDYDLIAKLSKGLGTAMKGIEISTLDASERMQERGWEKGS.

D24 serves as a coordination point for D-ribose 5-phosphate. The Schiff-base intermediate with D-ribose 5-phosphate role is filled by K81. G153 lines the D-ribose 5-phosphate pocket. R165 is a D-glyceraldehyde 3-phosphate binding site. D-ribose 5-phosphate-binding positions include G214 and 235–236 (GS).

Belongs to the PdxS/SNZ family. As to quaternary structure, in the presence of PdxT, forms a dodecamer of heterodimers.

It catalyses the reaction aldehydo-D-ribose 5-phosphate + D-glyceraldehyde 3-phosphate + L-glutamine = pyridoxal 5'-phosphate + L-glutamate + phosphate + 3 H2O + H(+). It participates in cofactor biosynthesis; pyridoxal 5'-phosphate biosynthesis. In terms of biological role, catalyzes the formation of pyridoxal 5'-phosphate from ribose 5-phosphate (RBP), glyceraldehyde 3-phosphate (G3P) and ammonia. The ammonia is provided by the PdxT subunit. Can also use ribulose 5-phosphate and dihydroxyacetone phosphate as substrates, resulting from enzyme-catalyzed isomerization of RBP and G3P, respectively. This is Pyridoxal 5'-phosphate synthase subunit PdxS from Halalkalibacterium halodurans (strain ATCC BAA-125 / DSM 18197 / FERM 7344 / JCM 9153 / C-125) (Bacillus halodurans).